A 130-amino-acid polypeptide reads, in one-letter code: Small ribosomal subunit protein uS8 (130 aa).

It belongs to the universal ribosomal protein uS8 family. Part of the 30S ribosomal subunit. Contacts proteins S5 and S12.

In terms of biological role, one of the primary rRNA binding proteins, it binds directly to 16S rRNA central domain where it helps coordinate assembly of the platform of the 30S subunit. In Shewanella pealeana (strain ATCC 700345 / ANG-SQ1), this protein is Small ribosomal subunit protein uS8.